Here is a 2144-residue protein sequence, read N- to C-terminus: Insulin-like receptor (2144 aa).

The N-terminal stretch at 1–43 (MFNMPRGVTKSKSKRGKIKMENDMAAAATTTACTLGHICVLCR) is a signal peptide. N-linked (GlcNAc...) asparagine glycosylation is present at Asn74. Residues 174 to 199 (RRQHQQQHHHHYQHHHQQHHQQHHQR) are compositionally biased toward basic residues. The segment at 174-200 (RRQHQQQHHHHYQHHHQQHHQQHHQRQ) is disordered. Residue Asn203 is glycosylated (N-linked (GlcNAc...) asparagine). The interval 229–256 (NYKQQQQLQHNQQLPRATPQQKQQEKDR) is disordered. Residues 232–242 (QQQQLQHNQQL) show a composition bias toward low complexity. N-linked (GlcNAc...) asparagine glycosylation is found at Asn265, Asn356, Asn376, Asn406, Asn468, and Asn509. 8 disulfides stabilise this stretch: Cys531–Cys539, Cys535–Cys545, Cys546–Cys554, Cys550–Cys564, Cys567–Cys576, Cys580–Cys591, Cys597–Cys618, and Cys635–Cys638. An FU repeat occupies 542 to 586 (EHTCCSQDCLGGCVIDKNGNESCISCRNVSFNNICMDSCPKGYYQ). N-linked (GlcNAc...) asparagine glycans are attached at residues Asn561 and Asn569. N-linked (GlcNAc...) asparagine glycans are attached at residues Asn751, Asn810, Asn824, Asn839, Asn864, Asn898, Asn946, Asn1053, Asn1147, Asn1218, and Asn1265. 2 Fibronectin type-III domains span residues 825–927 (VTTK…TNPG) and 928–1026 (RPSK…EYDD). The segment at 1053–1084 (NGSSDKSDGAEGAALDSNAIPNGGATNPSRRR) is disordered. Residues 1210-1305 (LKVDLEHANN…EVEHIKVEPP (96 aa)) form the Fibronectin type-III 3 domain. A helical transmembrane segment spans residues 1311–1331 (VFFWLLGIGLAFLIVSLFGYV). Topologically, residues 1332-2144 (CYLHKRKVPS…PPNGFIGREA (813 aa)) are cytoplasmic. Positions 1351–1354 (NPFY) are chico-binding. Residue Tyr1354 is modified to Phosphotyrosine; by autocatalysis. The Protein kinase domain maps to 1371 to 1659 (IIQLAPLGQG…LEPQCPNSQF (289 aa)). ATP-binding positions include 1377-1385 (LGQGSFGMV) and Lys1405. The active-site Proton acceptor is Asp1519. Phosphotyrosine; by autocatalysis occurs at positions 1545, 1549, and 1550. Disordered regions lie at residues 1690 to 1724 (VPLDQDLQDREQQEDATTPLRMGDYQQNSSLDQPP), 1788 to 1871 (RGYE…KKTV), 1886 to 1962 (LFNH…ISDN), and 2020 to 2144 (ISHN…GREA). Ser1816 carries the phosphoserine modification. Low complexity-rich tracts occupy residues 1849 to 1860 (STASAGSSNASS) and 1894 to 1916 (SNASHKSNASNAPSTSSNTNLTS). A compositionally biased stretch (acidic residues) spans 2042–2062 (SDEDNEQEEDDEDEDDDVDDE). Basic and acidic residues predominate over residues 2063–2073 (HVEHIKMERMP). The segment covering 2084–2120 (SKTQPPRSRSVSQTRKSPTNPNSGIGATGAGNRSNLL) has biased composition (polar residues).

The protein belongs to the protein kinase superfamily. Tyr protein kinase family. Insulin receptor subfamily. As to quaternary structure, tetramer of 2 alpha and 2 beta chains linked by disulfide bonds. The alpha chains contribute to the formation of the ligand-binding domain, while the beta chains carry the kinase domain. Interacts (via C-terminal cytoplasmic region) with dock/dreadlocks (via SH2 and SH3 domains); when autophosphorylated. May interact (via beta subunit) with chico/IRS-1; this interaction may lead to tyrosine phosphorylation of the insulin receptor substrate chico. Interacts with Elp6; the interaction may stabilize Elp6. Mn(2+) serves as cofactor. In terms of processing, the 280 kDa proreceptor is proteolytically processed to form a 120 kDa alpha subunit and a 170 kDa beta subunit. The beta subunit undergoes cell-specific cleavage to generate a 90 kDa beta subunit and a free 60 kDa C-terminal subunit. Both the 90 kDa and the 170 kDa beta subunits can assemble with the alpha subunits to form mature receptors. Post-translationally, autophosphorylated on tyrosine residues, including Tyr-1549 and Tyr-1550, in response to exogenous insulin. Tyr-1549 and Tyr-1550 are dephosphorylated by Ptp61F recruited by the dock/dreadlocks adapter protein. Phosphorylation of Tyr-1354 is required for Chico-binding.

It is found in the membrane. Its subcellular location is the cell projection. The protein localises to the axon. It localises to the growth cone membrane. It carries out the reaction L-tyrosyl-[protein] + ATP = O-phospho-L-tyrosyl-[protein] + ADP + H(+). Its activity is regulated as follows. Activated in response to insulin. Autophosphorylation activates the kinase activity. In terms of biological role, has a ligand-stimulated tyrosine-protein kinase activity. Binds 3 insulin-like peptide ligands. Regulates cell number and cell size during development by regulating cell growth and survival, affecting body size and organ size, including ovaries and imaginal disks. Plays a role in life-span determination. May be involved in regulation of other neuroendocrine signaling pathways. Involved in the development of the embryonic nervous system. Functions upstream of dock/dreadlocks for photoreceptor (R cell) axon guidance and targeting in the visual system. Involved in the acs mediated recovery of gut enterocytes following the cytoplasmic purge response to intestinal bacterial infection. This is Insulin-like receptor from Drosophila melanogaster (Fruit fly).